A 171-amino-acid chain; its full sequence is 3-hydroxydecanoyl-[acyl-carrier-protein] dehydratase (171 aa).

Histidine 70 is a catalytic residue.

This sequence belongs to the thioester dehydratase family. FabA subfamily. In terms of assembly, homodimer.

The protein localises to the cytoplasm. The catalysed reaction is a (3R)-hydroxyacyl-[ACP] = a (2E)-enoyl-[ACP] + H2O. It carries out the reaction (3R)-hydroxydecanoyl-[ACP] = (2E)-decenoyl-[ACP] + H2O. The enzyme catalyses (2E)-decenoyl-[ACP] = (3Z)-decenoyl-[ACP]. Its pathway is lipid metabolism; fatty acid biosynthesis. Its function is as follows. Necessary for the introduction of cis unsaturation into fatty acids. Catalyzes the dehydration of (3R)-3-hydroxydecanoyl-ACP to E-(2)-decenoyl-ACP and then its isomerization to Z-(3)-decenoyl-ACP. Can catalyze the dehydratase reaction for beta-hydroxyacyl-ACPs with saturated chain lengths up to 16:0, being most active on intermediate chain length. The chain is 3-hydroxydecanoyl-[acyl-carrier-protein] dehydratase from Ectopseudomonas mendocina (strain ymp) (Pseudomonas mendocina).